Reading from the N-terminus, the 295-residue chain is Nucleotide-binding protein BPUM_3115 (295 aa).

Gly-16–Thr-23 serves as a coordination point for ATP. Asp-67–Gly-70 provides a ligand contact to GTP.

This sequence belongs to the RapZ-like family.

In terms of biological role, displays ATPase and GTPase activities. In Bacillus pumilus (strain SAFR-032), this protein is Nucleotide-binding protein BPUM_3115.